We begin with the raw amino-acid sequence, 39 residues long: MNSTGRIPLWLVVTFGGIVVLTVLGIFIYGSYSGLGSSL.

Residues 9-29 (LWLVVTFGGIVVLTVLGIFIY) form a helical membrane-spanning segment.

The protein belongs to the PsbJ family. In terms of assembly, PSII is composed of 1 copy each of membrane proteins PsbA, PsbB, PsbC, PsbD, PsbE, PsbF, PsbH, PsbI, PsbJ, PsbK, PsbL, PsbM, PsbT, PsbY, PsbZ, Psb30/Ycf12, at least 3 peripheral proteins of the oxygen-evolving complex and a large number of cofactors. It forms dimeric complexes.

Its subcellular location is the plastid. The protein resides in the chloroplast thylakoid membrane. One of the components of the core complex of photosystem II (PSII). PSII is a light-driven water:plastoquinone oxidoreductase that uses light energy to abstract electrons from H(2)O, generating O(2) and a proton gradient subsequently used for ATP formation. It consists of a core antenna complex that captures photons, and an electron transfer chain that converts photonic excitation into a charge separation. This is Photosystem II reaction center protein J from Cyanidium caldarium (Red alga).